The chain runs to 283 residues: 2-dehydro-3-deoxyphosphooctonate aldolase (283 aa).

The protein belongs to the KdsA family.

The protein localises to the cytoplasm. The catalysed reaction is D-arabinose 5-phosphate + phosphoenolpyruvate + H2O = 3-deoxy-alpha-D-manno-2-octulosonate-8-phosphate + phosphate. It participates in carbohydrate biosynthesis; 3-deoxy-D-manno-octulosonate biosynthesis; 3-deoxy-D-manno-octulosonate from D-ribulose 5-phosphate: step 2/3. The protein operates within bacterial outer membrane biogenesis; lipopolysaccharide biosynthesis. This is 2-dehydro-3-deoxyphosphooctonate aldolase from Parasynechococcus marenigrum (strain WH8102).